Consider the following 669-residue polypeptide: GTP-binding protein 1 (669 aa).

The disordered stretch occupies residues 1–32 (MATERSRSAMDSPVPASMFAPEPSSPGAARAA). 8 positions are modified to phosphoserine: Ser6, Ser8, Ser12, Ser24, Ser25, Ser44, Ser47, and Ser69. Positions 158–389 (FLEVRVAVVG…LNLLSPRTSY (232 aa)) constitute a tr-type G domain. The segment at 167-174 (GNVDAGKS) is G1. 167–174 (GNVDAGKS) contacts GTP. The segment at 206–210 (GRTSS) is G2. The interval 252–255 (DLAG) is G3. GTP contacts are provided by residues 252–256 (DLAGH) and 308–311 (TKID). The interval 308 to 311 (TKID) is G4. The segment at 366-368 (SNV) is G5. Residues 573 to 595 (LLQTTNNSPMNSKPQQIKMQSTK) show a composition bias toward polar residues. Positions 573 to 669 (LLQTTNNSPM…GACVTPASGC (97 aa)) are disordered. Residue Ser580 is modified to Phosphoserine. Residues 646–657 (GRRRGGQRHKVK) are compositionally biased toward basic residues.

Belongs to the TRAFAC class translation factor GTPase superfamily. Classic translation factor GTPase family. GTPBP1 subfamily. As to quaternary structure, interacts with EXOSC2/RRP4, EXOSC3/RRP40, EXOSC5/RRP46, HNRNPD, HNRNPR and SYNCRIP. Identified in a complex with AANAT mRNA, but does not bind mRNA by itself.

The protein localises to the cytoplasm. Its function is as follows. Promotes degradation of target mRNA species. Plays a role in the regulation of circadian mRNA stability. Binds GTP and has GTPase activity. In Homo sapiens (Human), this protein is GTP-binding protein 1 (GTPBP1).